We begin with the raw amino-acid sequence, 151 residues long: UPF0208 membrane protein ECA3038 (151 aa).

A run of 2 helical transmembrane segments spans residues 46 to 66 (FGIR…IALG) and 69 to 89 (LGPA…GLWW).

This sequence belongs to the UPF0208 family.

It localises to the cell inner membrane. This is UPF0208 membrane protein ECA3038 from Pectobacterium atrosepticum (strain SCRI 1043 / ATCC BAA-672) (Erwinia carotovora subsp. atroseptica).